The sequence spans 387 residues: L-aspartate:5-guanidino-3-methyl-2-oxopentanoate transaminase (387 aa).

The residue at position 237 (Lys-237) is an N6-(pyridoxal phosphate)lysine.

It belongs to the class-I pyridoxal-phosphate-dependent aminotransferase family. Pyridoxal 5'-phosphate serves as cofactor.

It carries out the reaction (3R)-5-guanidino-3-methyl-2-oxopentanoate + L-aspartate = (3R)-3-methyl-L-arginine + oxaloacetate. The protein operates within antibiotic biosynthesis. Functionally, aminotransferase involved in the formation of the rare amino acid 3-methylarginine (MeArg), which is used as a potent antibiotic against the closely related soybean pathogen P.syringae pv. glycinea. Probably catalyzes transamination from the donor L-aspartate to 5-guanidino-3-methyl-2-oxopentanoic acid, generating 3-methylarginine. This is L-aspartate:5-guanidino-3-methyl-2-oxopentanoate transaminase from Pseudomonas syringae pv. syringae.